Consider the following 25-residue polypeptide: IWLTALKFLGKHAAKHLAKQQLSKL.

A Leucine amide modification is found at Leu25.

It belongs to the cationic peptide 04 (cupiennin) family. 05 subfamily. In terms of tissue distribution, expressed by the venom gland.

The protein resides in the secreted. Its subcellular location is the target cell membrane. Functionally, forms pore that permeabilize the cell membrane. Promotes efflux of calcium from synaptosomes, causes hemolysis, and dissipates voltage gradients across muscle membrane. Potently inhibits the growth of bacteria, yeast and Leishmania. Is lethal to lepidopteran larvae. May function both in the prey capture strategy as well as protection from infectious organisms arising from prey ingestion. The chain is M-lycotoxin-Hc1a from Hogna carolinensis (Carolina wolf spider).